The chain runs to 653 residues: Bifunctional lysine-specific demethylase and histidyl-hydroxylase NO66 (653 aa).

Low complexity predominate over residues 1 to 12 (MKKATTSAAAKS). 2 disordered regions span residues 1–50 (MKKA…DMLA) and 65–137 (FDDD…LERT). Residues 13 to 26 (QGNSKMQKNANNGT) show a composition bias toward polar residues. Ser44 carries the phosphoserine modification. Over residues 72–86 (STSKKTQSGSAAAAK) the composition is skewed to low complexity. A Phosphoserine modification is found at Ser131. A Phosphothreonine modification is found at Thr137. The residue at position 138 (Ser138) is a Phosphoserine. The disordered stretch occupies residues 184–208 (AEPTEEGNNNNDEKETETIETHKAD). Positions 194-208 (NDEKETETIETHKAD) are enriched in basic and acidic residues. Residues 300–450 (FYSDGCSIRL…NLLETLMPMV (151 aa)) form the JmjC domain. 3 residues coordinate Fe cation: His351, Asp353, and His416.

This sequence belongs to the ROX family. NO66 subfamily. Fe(2+) is required as a cofactor.

It is found in the nucleus. The enzyme catalyses N(6),N(6)-dimethyl-L-lysyl(36)-[histone H3] + 2 2-oxoglutarate + 2 O2 = L-lysyl(36)-[histone H3] + 2 formaldehyde + 2 succinate + 2 CO2. Its function is as follows. Oxygenase that can act as both a histone lysine demethylase and a ribosomal histidine hydroxylase. Specifically demethylates 'Lys-4' (H3K4me) and 'Lys-36' (H3K36me) of histone H3, thereby playing a central role in histone code. The sequence is that of Bifunctional lysine-specific demethylase and histidyl-hydroxylase NO66 from Drosophila melanogaster (Fruit fly).